A 251-amino-acid chain; its full sequence is RNA polymerase sigma factor SigI (251 aa).

The Polymerase core binding signature appears at D61–I74. A DNA-binding region (H-T-H motif) is located at residues V206 to K225.

The protein belongs to the sigma-70 factor family. SigI subfamily. In terms of assembly, interacts with RsgI.

It is found in the cytoplasm. Its activity is regulated as follows. Negatively regulated by the anti-sigma-I factor RsgI. Upon exposure to heat, SigI is released from RsgI and activated. Transient heat activation of SigI may depend upon DnaK chaperone. Its function is as follows. Sigma factors are initiation factors that promote the attachment of RNA polymerase to specific initiation sites and are then released. This sigma factor is involved in regulation of cell wall metabolism in response to heat stress. Acts by regulating the expression of genes such as bcrC, mreBH and lytE. Also plays a role in survival at low temperatures. The sequence is that of RNA polymerase sigma factor SigI from Bacillus subtilis (strain 168).